Consider the following 340-residue polypeptide: MNGSVLPSRGRVTINQVAEAAGVSKASVSRYIGGDRQLLADATARRIERAIDQLDYRPNQMARGLKRGRTRLIGMLVADILNPYSVAVMHGVETACREHGYSLVVCNTDRDDEQERHHLAALQSYNVEGLIVNTLGHHPGELRALHRELPMVLVDRQLAELDTDLVGLDNADAVEQALDHLQHRGFRDILLVTEPLDGTSSRIERVQAFNASIGRRPALKGQVLQTDDFFRDGLRAFLSASGPGPKALFTCNGVATLCATRQLRDLGCRLFDEVGLLALDELDWYPLVGSGITALAQPTDEIGRTAFERLLARLEGDREPARRVTFPAQLIVRGSTHPRG.

One can recognise an HTH lacI-type domain in the interval 12–67; sequence VTINQVAEAAGVSKASVSRYIGGDRQLLADATARRIERAIDQLDYRPNQMARGLKR. A DNA-binding region (H-T-H motif) is located at residues 14–33; that stretch reads INQVAEAAGVSKASVSRYIG.

Interacts with PtxR in the absence of 2-ketogluconate. Binding of the 2-ketogluconate effector to PtxS causes PtxS/PtxR complex dissociation.

2-ketogluconate acts as a molecular effector and causes dissociation of the PtxS/PtxR complex. In terms of biological role, negatively regulates glucose metabolism by binding directly to the promoter region of the kgu and gad operons. It also negatively regulates its own synthesis. In addition, in pathogenic strains, PtxS modulates PtxR activity in response to 2-ketogluconate. In the presence of PtxR, which also binds to the kgu and gad promoter regions, PtxS and PtxR form a tight complex, creating a DNA-loop that prevents RNA polymerase promoter access and expression of the glucose metabolism genes. Binding of the 2-ketogluconate effector to PtxS causes PtxS/PtxR complex dissociation and leads to the dissolution of the repression DNA-loop, facilitating the entry of the RNA polymerase and enabling the transcription of the genes. Also plays an important role in the regulation of the expression of the virulence factor exotoxin A (toxA). PtxS does not bind directly to the toxA promoter but negatively regulates the production of exotoxin A by binding to PtxR and interfering with its positive regulator activity. In the presence of 2-ketogluconate, PtxS is released and PtxR can recruit RNA polymerase. In Pseudomonas aeruginosa (strain ATCC 15692 / DSM 22644 / CIP 104116 / JCM 14847 / LMG 12228 / 1C / PRS 101 / PAO1), this protein is HTH-type transcriptional regulator PtxS.